The following is a 119-amino-acid chain: Immunoglobulin lambda variable 4-69 (119 aa).

Residues 1–20 (MAWTPLLFLTLLLHCTGSLS) form the signal peptide. Residues 21-45 (QLVLTQSPSASASLGASVKLTCTLS) are framework-1. Residues 21 to 119 (QLVLTQSPSA…YYCQTWGTGI (99 aa)) enclose the Ig-like domain. A disulfide bond links C42 and C112. Positions 46–52 (SGHSSYA) are complementarity-determining-1. The tract at residues 53–69 (IAWHQQQPEKGPRYLMK) is framework-2. Residues 70–76 (LNSDGSH) are complementarity-determining-2. Positions 73 to 92 (DGSHSKGDGIPDRFSGSSSG) are disordered. The interval 77–112 (SKGDGIPDRFSGSSSGAERYLTISSLQSEDEADYYC) is framework-3. Residues 113–119 (QTWGTGI) form a complementarity-determining-3 region.

As to quaternary structure, immunoglobulins are composed of two identical heavy chains and two identical light chains; disulfide-linked.

It localises to the secreted. Its subcellular location is the cell membrane. V region of the variable domain of immunoglobulin light chains that participates in the antigen recognition. Immunoglobulins, also known as antibodies, are membrane-bound or secreted glycoproteins produced by B lymphocytes. In the recognition phase of humoral immunity, the membrane-bound immunoglobulins serve as receptors which, upon binding of a specific antigen, trigger the clonal expansion and differentiation of B lymphocytes into immunoglobulins-secreting plasma cells. Secreted immunoglobulins mediate the effector phase of humoral immunity, which results in the elimination of bound antigens. The antigen binding site is formed by the variable domain of one heavy chain, together with that of its associated light chain. Thus, each immunoglobulin has two antigen binding sites with remarkable affinity for a particular antigen. The variable domains are assembled by a process called V-(D)-J rearrangement and can then be subjected to somatic hypermutations which, after exposure to antigen and selection, allow affinity maturation for a particular antigen. This is Immunoglobulin lambda variable 4-69 from Homo sapiens (Human).